A 495-amino-acid chain; its full sequence is Probable polyamine transporter At1g31830 (495 aa).

The next 11 helical transmembrane spans lie at 49–69, 79–99, 112–132, 156–176, 186–206, 230–250, 267–287, 357–377, 380–400, 417–437, and 442–462; these read VSML…PFGV, LLAL…EALI, GYVV…QGWM, VPAL…TILL, IVGW…AVMG, LYLN…TLAG, VILV…AIPL, TPLL…WLSF, IVAA…IAFV, IGTT…CAVV, and LKVA…HPLL.

Belongs to the amino acid-polyamine-organocation (APC) superfamily. Polyamine:cation symporter (PHS) (TC 2.A.3.12) family.

It is found in the cell membrane. Its function is as follows. Probable cell membrane polyamine/proton symporter involved in the polyamine uptake in cells. This Arabidopsis thaliana (Mouse-ear cress) protein is Probable polyamine transporter At1g31830.